The sequence spans 169 residues: dCTP pyrophosphatase 1 (169 aa).

Positions 1–26 are disordered; sequence MSASEEMLGGARGESTTATGPFSFSS. Over residues 14-26 the composition is skewed to polar residues; the sequence is ESTTATGPFSFSS. Residues His-37 and 46 to 50 contribute to the substrate site; that span reads WEQFH. Glu-62 and Glu-65 together coordinate Mg(2+). Trp-72 provides a ligand contact to substrate. Ser-84 is modified (phosphoserine). Mg(2+) is bound by residues Glu-94 and Asp-97. Residue Tyr-101 participates in substrate binding. Residues 143 to 169 form a disordered region; it reads LPHGATSENQAMGPADPASESTGQVST.

In terms of assembly, homotetramer. It depends on Mg(2+) as a cofactor.

The protein resides in the cytoplasm. Its subcellular location is the cytosol. It carries out the reaction dCTP + H2O = dCMP + diphosphate + H(+). Its function is as follows. Hydrolyzes deoxynucleoside triphosphates (dNTPs) to the corresponding nucleoside monophosphates. Has a strong preference for dCTP and its analogs including 5-iodo-dCTP and 5-methyl-dCTP for which it may even have a higher efficiency. May protect DNA or RNA against the incorporation of these genotoxic nucleotide analogs through their catabolism. This chain is dCTP pyrophosphatase 1, found in Bos taurus (Bovine).